Here is a 233-residue protein sequence, read N- to C-terminus: Phycoerythrobilin synthase (233 aa).

Belongs to the HY2 family.

The catalysed reaction is (3Z)-phycoerythrobilin + 2 oxidized 2[4Fe-4S]-[ferredoxin] = biliverdin IXalpha + 2 reduced 2[4Fe-4S]-[ferredoxin] + 4 H(+). In terms of biological role, plays a role in phycoerythrobilin biosynthesis, the red pigment chromophore photosynthetically active biliproteins of the host cyanobacteria. Uses a four-electron reduction to carry out the reactions catalyzed by two enzymes (EC 1.3.7.2 and EC 1.3.7.3) in host. This Prochlorococcus protein is Phycoerythrobilin synthase (pebS).